Consider the following 106-residue polypeptide: UPF0060 membrane protein CHU_3331 (106 aa).

4 helical membrane passes run 5 to 25 (FYFILAAFCEISGCYLFWLHF), 31 to 51 (ALLLLPAAACLLVFAYLLTKI), 59 to 79 (AYAVYGGIYIVCSLAWMYGIE), and 85 to 105 (IWDYIGVGICLIGASVILFAP).

It belongs to the UPF0060 family.

The protein resides in the cell inner membrane. The sequence is that of UPF0060 membrane protein CHU_3331 from Cytophaga hutchinsonii (strain ATCC 33406 / DSM 1761 / CIP 103989 / NBRC 15051 / NCIMB 9469 / D465).